A 909-amino-acid chain; its full sequence is Valine--tRNA ligase (909 aa).

Residues 52–62 (PNVTGVLHVGH) carry the 'HIGH' region motif. A 'KMSKS' region motif is present at residues 542-546 (KMSKS). ATP is bound at residue Lys-545. The stretch at 843 to 902 (IDIDQLKKRFEKELEKNEQNASKIDSKLKNENFVKNAPPEVIEGEKEKHAEFLRRIEKLK) forms a coiled coil.

This sequence belongs to the class-I aminoacyl-tRNA synthetase family. ValS type 1 subfamily. Monomer.

The protein resides in the cytoplasm. The enzyme catalyses tRNA(Val) + L-valine + ATP = L-valyl-tRNA(Val) + AMP + diphosphate. Its function is as follows. Catalyzes the attachment of valine to tRNA(Val). As ValRS can inadvertently accommodate and process structurally similar amino acids such as threonine, to avoid such errors, it has a 'posttransfer' editing activity that hydrolyzes mischarged Thr-tRNA(Val) in a tRNA-dependent manner. The sequence is that of Valine--tRNA ligase from Treponema denticola (strain ATCC 35405 / DSM 14222 / CIP 103919 / JCM 8153 / KCTC 15104).